Consider the following 306-residue polypeptide: Ribosomal protein L11 methyltransferase (306 aa).

4 residues coordinate S-adenosyl-L-methionine: Thr-154, Gly-179, Asp-201, and Asn-242.

It belongs to the methyltransferase superfamily. PrmA family.

The protein localises to the cytoplasm. It catalyses the reaction L-lysyl-[protein] + 3 S-adenosyl-L-methionine = N(6),N(6),N(6)-trimethyl-L-lysyl-[protein] + 3 S-adenosyl-L-homocysteine + 3 H(+). Its function is as follows. Methylates ribosomal protein L11. This Xanthomonas axonopodis pv. citri (strain 306) protein is Ribosomal protein L11 methyltransferase.